The following is a 291-amino-acid chain: tRNA dimethylallyltransferase (291 aa).

Position 9–16 (9–16) interacts with ATP; sequence GTTASGKT. Position 11–16 (11–16) interacts with substrate; sequence TASGKT. The segment at 34–37 is interaction with substrate tRNA; it reads DSLC.

This sequence belongs to the IPP transferase family. In terms of assembly, monomer. Requires Mg(2+) as cofactor.

The enzyme catalyses adenosine(37) in tRNA + dimethylallyl diphosphate = N(6)-dimethylallyladenosine(37) in tRNA + diphosphate. In terms of biological role, catalyzes the transfer of a dimethylallyl group onto the adenine at position 37 in tRNAs that read codons beginning with uridine, leading to the formation of N6-(dimethylallyl)adenosine (i(6)A). This is tRNA dimethylallyltransferase from Campylobacter lari (strain RM2100 / D67 / ATCC BAA-1060).